The chain runs to 82 residues: Protein C2 (82 aa).

This chain is Protein C2 (C2), found in Sterkiella nova (Ciliate).